The primary structure comprises 49 residues: Large ribosomal subunit protein bL33 (49 aa).

This sequence belongs to the bacterial ribosomal protein bL33 family.

This Syntrophobacter fumaroxidans (strain DSM 10017 / MPOB) protein is Large ribosomal subunit protein bL33.